Consider the following 205-residue polypeptide: Small ribosomal subunit protein uS4 (205 aa).

Residues Asn18–Ser46 form a disordered region. The region spanning Arg94–Leu154 is the S4 RNA-binding domain.

The protein belongs to the universal ribosomal protein uS4 family. As to quaternary structure, part of the 30S ribosomal subunit. Contacts protein S5. The interaction surface between S4 and S5 is involved in control of translational fidelity.

In terms of biological role, one of the primary rRNA binding proteins, it binds directly to 16S rRNA where it nucleates assembly of the body of the 30S subunit. Functionally, with S5 and S12 plays an important role in translational accuracy. The chain is Small ribosomal subunit protein uS4 from Bradyrhizobium diazoefficiens (strain JCM 10833 / BCRC 13528 / IAM 13628 / NBRC 14792 / USDA 110).